The chain runs to 163 residues: Putative C-type lectin protein FPV239 (163 aa).

The C-type lectin domain maps to 48-159; it reads CKEGWVGYNK…CFLPKKWICR (112 aa). Cystine bridges form between Cys76-Cys158 and Cys137-Cys150.

The chain is Putative C-type lectin protein FPV239 from Fowlpox virus (strain NVSL) (FPV).